Consider the following 40-residue polypeptide: Photosystem I reaction center subunit IX (40 aa).

The helical transmembrane segment at 4–24 (FFESWPMAAVLWVWLTAGIIV) threads the bilayer.

This sequence belongs to the PsaJ family.

It is found in the cellular thylakoid membrane. May help in the organization of the PsaE and PsaF subunits. This is Photosystem I reaction center subunit IX from Prochlorococcus marinus (strain MIT 9313).